The chain runs to 1892 residues: Alpha-2-macroglobulin (1892 aa).

The first 23 residues, 1 to 23, serve as a signal peptide directing secretion; the sequence is MKNIFRKFVFTIFVCLINLQLIA. Positions 1441 to 1444 form a cross-link, isoglutamyl cysteine thioester (Cys-Gln); sequence CTEQ.

This sequence belongs to the protease inhibitor I39 (alpha-2-macroglobulin) family. Bacterial alpha-2-macroglobulin subfamily.

Functionally, protects the bacterial cell from host peptidases. In Rickettsia conorii (strain ATCC VR-613 / Malish 7), this protein is Alpha-2-macroglobulin.